Reading from the N-terminus, the 929-residue chain is Valine--tRNA ligase (929 aa).

A 'HIGH' region motif is present at residues 59–69 (PNVTGSLHMGH). The short motif at 557–561 (KMSKS) is the 'KMSKS' region element. Lys-560 provides a ligand contact to ATP. Positions 862–929 (LVDLDALRGR…LARQRLSDLG (68 aa)) form a coiled coil.

Belongs to the class-I aminoacyl-tRNA synthetase family. ValS type 1 subfamily. In terms of assembly, monomer.

Its subcellular location is the cytoplasm. It catalyses the reaction tRNA(Val) + L-valine + ATP = L-valyl-tRNA(Val) + AMP + diphosphate. Functionally, catalyzes the attachment of valine to tRNA(Val). As ValRS can inadvertently accommodate and process structurally similar amino acids such as threonine, to avoid such errors, it has a 'posttransfer' editing activity that hydrolyzes mischarged Thr-tRNA(Val) in a tRNA-dependent manner. In Prochlorococcus marinus (strain MIT 9313), this protein is Valine--tRNA ligase.